A 308-amino-acid polypeptide reads, in one-letter code: GMP synthase [glutamine-hydrolyzing] subunit B (308 aa).

The GMPS ATP-PPase domain maps to 2 to 183 (LNPSDFIEEA…LGLPREMIQR (182 aa)). 29–35 (SGGVDSS) contributes to the ATP binding site.

Heterodimer composed of a glutamine amidotransferase subunit (A) and a GMP-binding subunit (B).

It catalyses the reaction XMP + L-glutamine + ATP + H2O = GMP + L-glutamate + AMP + diphosphate + 2 H(+). The protein operates within purine metabolism; GMP biosynthesis; GMP from XMP (L-Gln route): step 1/1. Its function is as follows. Catalyzes the synthesis of GMP from XMP. The polypeptide is GMP synthase [glutamine-hydrolyzing] subunit B (guaAB) (Methanothermobacter thermautotrophicus (strain ATCC 29096 / DSM 1053 / JCM 10044 / NBRC 100330 / Delta H) (Methanobacterium thermoautotrophicum)).